Here is a 156-residue protein sequence, read N- to C-terminus: Small ribosomal subunit protein bS16 (156 aa).

Positions 114-156 (ENEPVAEAITPKKKKAAKADEAKAEDTAADAEAPAADAEAADK) are disordered. Positions 130-139 (AKADEAKAED) are enriched in basic and acidic residues. Over residues 143–156 (DAEAPAADAEAADK) the composition is skewed to low complexity.

It belongs to the bacterial ribosomal protein bS16 family.

The sequence is that of Small ribosomal subunit protein bS16 from Rhodococcus erythropolis (strain PR4 / NBRC 100887).